Here is a 152-residue protein sequence, read N- to C-terminus: MVKRVQLVLTKDVSKLGRSGDLVDVAPGYARNYLIPQSLATHATPGILKQVERRREQERQRQLELRQQALEQKESLEKVGSLKIAKQVGENEAIFGTVTSQDVADAIQAATSQEVDRRGITIPDIGKLGTYKAEIKLFSDVTAQIDIEVVAS.

This sequence belongs to the bacterial ribosomal protein bL9 family.

Its function is as follows. Binds to the 23S rRNA. The chain is Large ribosomal subunit protein bL9 from Nostoc sp. (strain PCC 7120 / SAG 25.82 / UTEX 2576).